The chain runs to 609 residues: Thiamine metabolism regulatory protein THI3 (609 aa).

Residues 578 to 598 (SKQVQEENENSSAVNTPTPEF) are disordered.

Belongs to the TPP enzyme family. Mg(2+) serves as cofactor. Requires thiamine diphosphate as cofactor.

Its subcellular location is the nucleus. The catalysed reaction is 4-methyl-2-oxopentanoate + H(+) = 3-methylbutanal + CO2. It carries out the reaction (S)-3-methyl-2-oxopentanoate + H(+) = 2-methylbutanal + CO2. It functions in the pathway amino-acid degradation; Ehrlich pathway. Its function is as follows. One of five 2-oxo acid decarboxylases (PDC1, PDC5, PDC6, ARO10, and THI3) involved in amino acid catabolism. The enzyme catalyzes the decarboxylation of amino acids, which, in a first step, have been transaminated to the corresponding 2-oxo acids (alpha-keto-acids). In a third step, the resulting aldehydes are reduced to alcohols, collectively referred to as fusel oils or alcohols. Its preferred substrates are the transaminated amino acids derived from leucine (4-methyl-2-oxopentanoate, also alpha-keto-isocaproate) and isoleucine ((3S)-3-methyl-2-oxopentanoate, also alpha-keto-beta-methylvalerate), whereas transaminated valine, transaminated aromatic amino acids, and pyruvate are no substrates. In analogy to the pyruvate decarboxylases the enzyme may in a side-reaction catalyze condensation (or carboligation) reactions leading to the formation of 2-hydroxy ketone, collectively called acyloins. The enzyme is also positively regulating the thiamine metabolism by a molecular mechanism that may involve thiamine concentration sensing and signal transmission. This Saccharomyces cerevisiae (strain ATCC 204508 / S288c) (Baker's yeast) protein is Thiamine metabolism regulatory protein THI3 (THI3).